The chain runs to 222 residues: Octanoyltransferase (222 aa).

The region spanning 34 to 214 is the BPL/LPL catalytic domain; that stretch reads AEAPSTVLLL…EFRKHEEALV (181 aa). Substrate contacts are provided by residues 72–79, 144–146, and 157–159; these read RGGKLTWH, AIG, and GIA. Catalysis depends on cysteine 175, which acts as the Acyl-thioester intermediate.

The protein belongs to the LipB family.

It is found in the cytoplasm. It catalyses the reaction octanoyl-[ACP] + L-lysyl-[protein] = N(6)-octanoyl-L-lysyl-[protein] + holo-[ACP] + H(+). Its pathway is protein modification; protein lipoylation via endogenous pathway; protein N(6)-(lipoyl)lysine from octanoyl-[acyl-carrier-protein]: step 1/2. In terms of biological role, catalyzes the transfer of endogenously produced octanoic acid from octanoyl-acyl-carrier-protein onto the lipoyl domains of lipoate-dependent enzymes. Lipoyl-ACP can also act as a substrate although octanoyl-ACP is likely to be the physiological substrate. The polypeptide is Octanoyltransferase (Arthrobacter sp. (strain FB24)).